The primary structure comprises 353 residues: Fe(3+) ions import ATP-binding protein FbpC (353 aa).

Residues 9–239 (VTFENVTKKF…PASAFIADFM (231 aa)) enclose the ABC transporter domain. An ATP-binding site is contributed by 41-48 (GPSGCGKT).

It belongs to the ABC transporter superfamily. Fe(3+) ion importer (TC 3.A.1.10) family. The complex is composed of two ATP-binding proteins (FbpC), two transmembrane proteins (FbpB) and a solute-binding protein (FbpA).

Its subcellular location is the cell inner membrane. It carries out the reaction Fe(3+)(out) + ATP + H2O = Fe(3+)(in) + ADP + phosphate + H(+). Functionally, part of the ABC transporter complex FbpABC involved in Fe(3+) ions import. Responsible for energy coupling to the transport system. This is Fe(3+) ions import ATP-binding protein FbpC from Brucella abortus (strain 2308).